Reading from the N-terminus, the 489-residue chain is Rhamnulokinase (489 aa).

ATP is bound at residue alanine 13–arginine 17. Residues cysteine 68 and cysteine 222 are joined by a disulfide bond. Substrate is bound by residues glycine 83 and histidine 236–threonine 238. Aspartate 237 acts as the Proton acceptor in catalysis. Threonine 259 lines the ATP pocket. Asparagine 296 contacts substrate. Position 304 (glutamine 304) interacts with ATP. Cysteine 353 and cysteine 370 form a disulfide bridge. An ATP-binding site is contributed by glycine 402. An intrachain disulfide couples cysteine 413 to cysteine 417.

It belongs to the rhamnulokinase family. In terms of assembly, monomer. It depends on Mg(2+) as a cofactor.

It carries out the reaction L-rhamnulose + ATP = L-rhamnulose 1-phosphate + ADP + H(+). It functions in the pathway carbohydrate degradation; L-rhamnose degradation; glycerone phosphate from L-rhamnose: step 2/3. In terms of biological role, involved in the catabolism of L-rhamnose (6-deoxy-L-mannose). Catalyzes the transfer of the gamma-phosphate group from ATP to the 1-hydroxyl group of L-rhamnulose to yield L-rhamnulose 1-phosphate. This is Rhamnulokinase from Escherichia coli (strain K12 / DH10B).